We begin with the raw amino-acid sequence, 884 residues long: Chondroitin sulfate synthase 3 (884 aa).

Residues M1 to R7 lie on the Cytoplasmic side of the membrane. Residues P8–A28 form a helical; Signal-anchor for type II membrane protein membrane-spanning segment. Residues P29 to S884 are Lumenal-facing. The disordered stretch occupies residues Y47 to V164. 2 stretches are compositionally biased toward low complexity: residues Q60–R69 and P84–P96. N155 and N281 each carry an N-linked (GlcNAc...) asparagine glycan. A disordered region spans residues S437–H456. N-linked (GlcNAc...) asparagine glycosylation is present at N712. Positions 722 and 836 each coordinate a divalent metal cation. N880 is a glycosylation site (N-linked (GlcNAc...) asparagine).

This sequence belongs to the chondroitin N-acetylgalactosaminyltransferase family. Co(2+) serves as cofactor. Requires Mn(2+) as cofactor. Cd(2+) is required as a cofactor.

The protein resides in the golgi apparatus. Its subcellular location is the golgi stack membrane. It carries out the reaction 3-O-(beta-D-GlcA-(1-&gt;3)-beta-D-GalNAc-(1-&gt;4)-beta-D-GlcA-(1-&gt;3)-beta-D-Gal-(1-&gt;3)-beta-D-Gal-(1-&gt;4)-beta-D-Xyl)-L-seryl-[protein] + UDP-N-acetyl-alpha-D-galactosamine = 3-O-(beta-D-GalNAc-(1-&gt;4)-beta-D-GlcA-(1-&gt;3)-beta-D-GalNAc-(1-&gt;4)-beta-D-GlcA-(1-&gt;3)-beta-D-Gal-(1-&gt;3)-beta-D-Gal-(1-&gt;4)-beta-D-Xyl)-L-seryl-[protein] + UDP + H(+). The enzyme catalyses 3-O-{beta-D-GlcA-(1-&gt;3)-[beta-D-GalNAc-(1-&gt;4)-beta-D-GlcA-(1-&gt;3)](n)-beta-D-GalNAc-(1-&gt;4)-beta-D-GlcA-(1-&gt;3)-beta-D-Gal-(1-&gt;3)-beta-D-Gal-(1-&gt;4)-beta-D-Xyl}-L-seryl-[protein] + UDP-N-acetyl-alpha-D-galactosamine = 3-O-{[beta-D-GalNAc-(1-&gt;4)-beta-D-GlcA-(1-&gt;3)](n+1)-beta-D-GalNAc-(1-&gt;4)-beta-D-GlcA-(1-&gt;3)-beta-D-Gal-(1-&gt;3)-beta-D-Gal-(1-&gt;4)-beta-D-Xyl}-L-seryl-[protein] + UDP + H(+). The catalysed reaction is 3-O-(beta-D-GalNAc-(1-&gt;4)-beta-D-GlcA-(1-&gt;3)-beta-D-Gal-(1-&gt;3)-beta-D-Gal-(1-&gt;4)-beta-D-Xyl)-L-seryl-[protein] + UDP-alpha-D-glucuronate = 3-O-(beta-D-GlcA-(1-&gt;3)-beta-D-GalNAc-(1-&gt;4)-beta-D-GlcA-(1-&gt;3)-beta-D-Gal-(1-&gt;3)-beta-D-Gal-(1-&gt;4)-beta-D-Xyl)-L-seryl-[protein] + UDP + H(+). It catalyses the reaction 3-O-{[beta-D-GalNAc-(1-&gt;4)-beta-D-GlcA-(1-&gt;3)](n)-beta-D-GalNAc-(1-&gt;4)-beta-D-GlcA-(1-&gt;3)-beta-D-Gal-(1-&gt;3)-beta-D-Gal-(1-&gt;4)-beta-D-Xyl}-L-seryl-[protein] + UDP-alpha-D-glucuronate = 3-O-{beta-D-GlcA-(1-&gt;3)-[beta-D-GalNAc-(1-&gt;4)-beta-D-GlcA-(1-&gt;3)](n)-beta-D-GalNAc-(1-&gt;4)-beta-D-GlcA-(1-&gt;3)-beta-D-Gal-(1-&gt;3)-beta-D-Gal-(1-&gt;4)-beta-D-Xyl}-L-seryl-[protein] + UDP + H(+). In terms of biological role, has both beta-1,3-glucuronic acid and beta-1,4-N-acetylgalactosamine transferase activity. Transfers glucuronic acid (GlcUA) from UDP-GlcUA and N-acetylgalactosamine (GalNAc) from UDP-GalNAc to the non-reducing end of the elongating chondroitin polymer. Specific activity is much reduced compared to CHSY1. In Mus musculus (Mouse), this protein is Chondroitin sulfate synthase 3 (Chsy3).